The sequence spans 84 residues: PAMP-induced secreted peptide 2 (84 aa).

The N-terminal stretch at 1 to 24 (MMMNKNVLSSILFFMLIGSVLVES) is a signal peptide. The disordered stretch occupies residues 50–84 (KDSGPSPGEGHKVVDRKDTFRFVKHSGPSPSGPGH). Basic and acidic residues predominate over residues 58 to 70 (EGHKVVDRKDTFR). 2 positions are modified to 4-hydroxyproline: Pro-77 and Pro-79.

Post-translationally, contains 4-hydroxyproline; hydroxylated on Pro-77 and Pro-79.

It is found in the secreted. The protein resides in the extracellular space. Its subcellular location is the apoplast. Endogenous secreted peptide that acts as elicitor of immune response and positive regulator of defense response. Amplifies the immune response triggered by flg22, the active epitope of bacterial flagellin. Acts as a negative regulator of root growth. The sequence is that of PAMP-induced secreted peptide 2 from Arabidopsis thaliana (Mouse-ear cress).